The primary structure comprises 661 residues: UvrABC system protein B (661 aa).

The Helicase ATP-binding domain occupies lysine 25–arginine 182. Glycine 38–threonine 45 is an ATP binding site. Residues tyrosine 91–isoleucine 114 carry the Beta-hairpin motif. The Helicase C-terminal domain maps to glutamine 430 to isoleucine 592. The UVR domain maps to lysine 621–alanine 656.

This sequence belongs to the UvrB family. In terms of assembly, forms a heterotetramer with UvrA during the search for lesions. Interacts with UvrC in an incision complex.

It is found in the cytoplasm. Its function is as follows. The UvrABC repair system catalyzes the recognition and processing of DNA lesions. A damage recognition complex composed of 2 UvrA and 2 UvrB subunits scans DNA for abnormalities. Upon binding of the UvrA(2)B(2) complex to a putative damaged site, the DNA wraps around one UvrB monomer. DNA wrap is dependent on ATP binding by UvrB and probably causes local melting of the DNA helix, facilitating insertion of UvrB beta-hairpin between the DNA strands. Then UvrB probes one DNA strand for the presence of a lesion. If a lesion is found the UvrA subunits dissociate and the UvrB-DNA preincision complex is formed. This complex is subsequently bound by UvrC and the second UvrB is released. If no lesion is found, the DNA wraps around the other UvrB subunit that will check the other stand for damage. The polypeptide is UvrABC system protein B (Rickettsia bellii (strain RML369-C)).